The following is a 339-amino-acid chain: ADP,ATP carrier protein (339 aa).

Solcar repeat units follow at residues 39–133, 145–234, and 246–328; these read MAFV…IKGL, RFFV…AKGV, and AKWA…IKKF. The next 5 helical transmembrane spans lie at 41-70, 110-134, 144-164, 212-232, and 245-265; these read FVKD…LLLQ, LANV…KGLF, WRFF…SLLI, VSVQ…DTAK, and FAKW…SYPF. Residues Arg-115 and Lys-127 each contribute to the ADP site. Residue Arg-269 coordinates ADP. An important for transport activity region spans residues 269–274; that stretch reads RRRLMM. The Nucleotide carrier signature motif motif lies at 269 to 274; the sequence is RRRLMM. The chain crosses the membrane as a helical span at residues 305 to 322; the sequence is AWSNVLRGAGGAFVLVLY.

Belongs to the mitochondrial carrier (TC 2.A.29) family. As to quaternary structure, monomer.

It localises to the mitochondrion inner membrane. The enzyme catalyses ADP(in) + ATP(out) = ADP(out) + ATP(in). The matrix-open state (m-state) is inhibited by the membrane-permeable bongkrekic acid (BKA). The cytoplasmic-open state (c-state) is inhibited by the membrane-impermeable toxic inhibitor carboxyatractyloside (CATR). Its function is as follows. ADP:ATP antiporter that mediates import of ADP into the mitochondrial matrix for ATP synthesis, and export of ATP out to fuel the cell. Cycles between the cytoplasmic-open state (c-state) and the matrix-open state (m-state): operates by the alternating access mechanism with a single substrate-binding site intermittently exposed to either the cytosolic (c-state) or matrix (m-state) side of the inner mitochondrial membrane. The polypeptide is ADP,ATP carrier protein (Parachlorella kessleri (Green alga)).